The chain runs to 334 residues: Serine racemase (334 aa).

A Mg(2+)-binding site is contributed by E13. ATP is bound by residues S31, S32, I33, K51, and T52. Active-site proton acceptor residues include K56 and S84. The residue at position 56 (K56) is an N6-(pyridoxal phosphate)lysine. Residue N86 participates in pyridoxal 5'-phosphate binding. Q89 contributes to the ATP binding site. S-nitrosocysteine is present on C113. Y121 lines the ATP pocket. N154 contacts pyridoxal 5'-phosphate. D178 lines the Mg(2+) pocket. Pyridoxal 5'-phosphate is bound by residues G185, G186, G187, G188, and M189. 4 residues coordinate Mg(2+): E210, A214, D216, and N247. Positions 210, 214, 216, and 247 each coordinate Ca(2+). Mn(2+) contacts are provided by E210, A214, and D216. ATP is bound at residue K279. Position 313 (S313) interacts with pyridoxal 5'-phosphate. N316 is a binding site for ATP.

It belongs to the serine/threonine dehydratase family. Homodimer. Mg(2+) is required as a cofactor. Requires Mn(2+) as cofactor. The cofactor is Ca(2+). It depends on pyridoxal 5'-phosphate as a cofactor. Post-translationally, S-nitrosylated, leading to decrease the enzyme activity.

It catalyses the reaction L-serine = D-serine. The enzyme catalyses L-serine = pyruvate + NH4(+). It carries out the reaction D-serine = pyruvate + NH4(+). Its function is as follows. Catalyzes the synthesis of D-serine from L-serine. D-serine is a key coagonist with glutamate at NMDA receptors. Has dehydratase activity towards both L-serine and D-serine. This chain is Serine racemase (SRR), found in Bos taurus (Bovine).